Reading from the N-terminus, the 173-residue chain is ATP-dependent protease subunit HslV (173 aa).

The active site involves T2. G157, C160, and T163 together coordinate Na(+).

It belongs to the peptidase T1B family. HslV subfamily. A double ring-shaped homohexamer of HslV is capped on each side by a ring-shaped HslU homohexamer. The assembly of the HslU/HslV complex is dependent on binding of ATP.

It localises to the cytoplasm. It carries out the reaction ATP-dependent cleavage of peptide bonds with broad specificity.. Its activity is regulated as follows. Allosterically activated by HslU binding. Protease subunit of a proteasome-like degradation complex believed to be a general protein degrading machinery. In Nitrosomonas eutropha (strain DSM 101675 / C91 / Nm57), this protein is ATP-dependent protease subunit HslV.